We begin with the raw amino-acid sequence, 626 residues long: Hormonally up-regulated neu tumor-associated kinase homolog B (626 aa).

ATP-binding positions include 1-2 (KV) and Lys-17. Positions 1–246 (KVREGLHVGT…IQQALANRWL (246 aa)) constitute a Protein kinase domain. The Proton acceptor role is filled by Asp-112. Positions 336–357 (KYKMNKNSYEERRSKDLEKRGE) are enriched in basic and acidic residues. Disordered stretches follow at residues 336-407 (KYKM…ESFG), 477-574 (VNRE…RSRG), and 590-615 (QVVS…PGYA). A compositionally biased stretch (polar residues) spans 374–390 (SHRQSTCLTPQGHSSSK). Basic and acidic residues predominate over residues 392-405 (PIKERRSSKSERES). Polar residues predominate over residues 518–532 (DNTSPLKGHSNQASF). Residues 539–555 (SPSSPESMSPTSPHSPS) are compositionally biased toward low complexity. Residues 556-566 (CNNNISGNLGS) show a composition bias toward polar residues.

The protein belongs to the protein kinase superfamily. CAMK Ser/Thr protein kinase family. SNF1 subfamily. In the egg, expressed predominantly in the animal hemisphere. This pattern of expression persists throughout the cleavage and blastula stages. At the gastrula stage, expression is restricted to the ectoderm. In later-stage embryos, expressed over the entire embryonic surface including the open neural plate at stage 15 and the neural tube at stage 22. In tadpoles, strongly expressed in the neural tube, motor neurons, brain regions and sensory organs (otic vesicle and eye). Also expressed in the perisomitic mesoderm, brachial arches and embryonic epidermis of tadpoles.

It carries out the reaction L-seryl-[protein] + ATP = O-phospho-L-seryl-[protein] + ADP + H(+). It catalyses the reaction L-threonyl-[protein] + ATP = O-phospho-L-threonyl-[protein] + ADP + H(+). This chain is Hormonally up-regulated neu tumor-associated kinase homolog B (hunk-b), found in Xenopus laevis (African clawed frog).